The chain runs to 396 residues: Inositol polyphosphate multikinase (396 aa).

Positions 1 to 13 (MAAEPPALRLRPP) are enriched in low complexity. A disordered region spans residues 1-22 (MAAEPPALRLRPPGSTGDSPPV). At A2 the chain carries N-acetylalanine. Phosphoserine is present on S19. Residue K58 coordinates ATP. Residue R65 participates in substrate binding. ATP is bound by residues 114 to 116 (EDV) and D127. Substrate is bound by residues K129, 143–150 (KIQQQVSK), and Q179. Residues 300 to 310 (RHRKLYAKKHQ) carry the Nuclear localization signal motif. ATP is bound at residue D365.

This sequence belongs to the inositol phosphokinase (IPK) family. The cofactor is Mg(2+). As to expression, highly expressed in kidney, and at lower levels in hippocampus, brain cortex, cerebellum, heart and lung.

It localises to the nucleus. The enzyme catalyses 1D-myo-inositol 1,4,5-trisphosphate + 2 ATP = 1D-myo-inositol 1,3,4,5,6-pentakisphosphate + 2 ADP + 2 H(+). It carries out the reaction 1D-myo-inositol 1,3,4,6-tetrakisphosphate + ATP = 1D-myo-inositol 1,3,4,5,6-pentakisphosphate + ADP + H(+). It catalyses the reaction 1-octadecanoyl-2-(5Z,8Z,11Z,14Z)-eicosatetraenoyl-sn-glycero-3-phospho-1D-myo-inositol 4,5-bisphosphate + ATP = 1-octadecanoyl-2-(5Z,8Z,11Z,14Z-eicosatetraenoyl)-sn-glycero-3-phospho-(1D-myo-inositol 3,4,5-triphosphate) + ADP + H(+). The catalysed reaction is a 1,2-diacyl-sn-glycero-3-phospho-(1D-myo-inositol-4,5-bisphosphate) + ATP = a 1,2-diacyl-sn-glycero-3-phospho-(1D-myo-inositol-3,4,5-trisphosphate) + ADP + H(+). The enzyme catalyses 1D-myo-inositol 1,4,5,6-tetrakisphosphate + ATP = 1D-myo-inositol 1,3,4,5,6-pentakisphosphate + ADP + H(+). The protein operates within phospholipid metabolism; phosphatidylinositol metabolism. Its function is as follows. Inositol phosphate kinase with a broad substrate specificity. Phosphorylates inositol 1,4,5-trisphosphate (Ins(1,4,5)P3) first to inositol 1,3,4,5-tetrakisphosphate and then to inositol 1,3,4,5,6-pentakisphosphate (Ins(1,3,4,5,6)P5). Phosphorylates inositol 1,3,4,6-tetrakisphosphate (Ins(1,3,4,6)P4). Phosphorylates inositol 1,4,5,6-tetrakisphosphate (Ins(1,4,5,6)P4). Phosphorylates glycero-3-phospho-1D-myo-inositol 4,5-bisphosphate to glycero-3-phospho-1D-myo-inositol 3,4,5-trisphosphate. Plays an important role in MLKL-mediated necroptosis via its role in the biosynthesis of inositol pentakisphosphate (InsP5) and inositol hexakisphosphate (InsP6). Binding of these highly phosphorylated inositol phosphates to MLKL mediates the release of an N-terminal auto-inhibitory region, leading to activation of the kinase. Essential for activated phospho-MLKL to oligomerize and localize to the cell membrane during necroptosis. Required for normal embryonic development, probably via its role in the biosynthesis of inositol 1,3,4,5,6-pentakisphosphate (Ins(1,3,4,5,6)P5) and inositol hexakisphosphate (InsP6). This is Inositol polyphosphate multikinase (Ipmk) from Rattus norvegicus (Rat).